We begin with the raw amino-acid sequence, 205 residues long: Urease accessory protein UreE (205 aa).

The span at 170 to 192 (EHHGHSHSHSHDHDHDHDHDHQH) shows a compositional bias: basic and acidic residues. The tract at residues 170-205 (EHHGHSHSHSHDHDHDHDHDHQHGPCCSHGHHHGHR) is disordered.

This sequence belongs to the UreE family.

The protein localises to the cytoplasm. Its function is as follows. Involved in urease metallocenter assembly. Binds nickel. Probably functions as a nickel donor during metallocenter assembly. This chain is Urease accessory protein UreE, found in Burkholderia pseudomallei (strain 668).